Consider the following 94-residue polypeptide: Small ribosomal subunit protein bS20c (94 aa).

Belongs to the bacterial ribosomal protein bS20 family.

The protein resides in the plastid. It localises to the chloroplast. Its function is as follows. Binds directly to 16S ribosomal RNA. The polypeptide is Small ribosomal subunit protein bS20c (Porphyra purpurea (Red seaweed)).